The following is a 234-amino-acid chain: Peptidase E (234 aa).

Active-site charge relay system residues include Ser-123, Asp-138, and His-160.

The protein belongs to the peptidase S51 family.

Its subcellular location is the cytoplasm. The enzyme catalyses Dipeptidase E catalyzes the hydrolysis of dipeptides Asp-|-Xaa. It does not act on peptides with N-terminal Glu, Asn or Gln, nor does it cleave isoaspartyl peptides.. Functionally, hydrolyzes dipeptides containing N-terminal aspartate residues. May play a role in allowing the cell to use peptide aspartate to spare carbon otherwise required for the synthesis of the aspartate family of amino acids. This Pasteurella multocida (strain Pm70) protein is Peptidase E.